The following is a 255-amino-acid chain: 4-hydroxy-tetrahydrodipicolinate reductase (255 aa).

NAD(+)-binding positions include 9–14 (GFKGRM), 89–91 (GTT), and 115–118 (APNF). His145 acts as the Proton donor/acceptor in catalysis. Residue His146 participates in (S)-2,3,4,5-tetrahydrodipicolinate binding. Residue Lys149 is the Proton donor of the active site. Position 155-156 (155-156 (GT)) interacts with (S)-2,3,4,5-tetrahydrodipicolinate.

It belongs to the DapB family.

Its subcellular location is the cytoplasm. The enzyme catalyses (S)-2,3,4,5-tetrahydrodipicolinate + NAD(+) + H2O = (2S,4S)-4-hydroxy-2,3,4,5-tetrahydrodipicolinate + NADH + H(+). It catalyses the reaction (S)-2,3,4,5-tetrahydrodipicolinate + NADP(+) + H2O = (2S,4S)-4-hydroxy-2,3,4,5-tetrahydrodipicolinate + NADPH + H(+). It functions in the pathway amino-acid biosynthesis; L-lysine biosynthesis via DAP pathway; (S)-tetrahydrodipicolinate from L-aspartate: step 4/4. Functionally, catalyzes the conversion of 4-hydroxy-tetrahydrodipicolinate (HTPA) to tetrahydrodipicolinate. The polypeptide is 4-hydroxy-tetrahydrodipicolinate reductase (Streptococcus mutans serotype c (strain ATCC 700610 / UA159)).